The following is a 275-amino-acid chain: Adaptin ear-binding coat-associated protein 1 (275 aa).

Residues 168-275 (AKKGGASKPR…APQPSNWVQF (108 aa)) form a disordered region. The segment covering 187–201 (LPPPPGGKVTIPPPS) has biased composition (pro residues). Thr-211 bears the Phosphothreonine mark. Residues 233-248 (SPAPVSTSAPAPVSTS) are compositionally biased toward low complexity. 2 consecutive short sequence motifs (WXXF motif) follow at residues 252 to 255 (WGDF) and 272 to 275 (WVQF). Polar residues predominate over residues 256 to 275 (STASSSVPNQAPQPSNWVQF).

Belongs to the NECAP family. In terms of assembly, interacts with AP1G1 and AP2A1 components of the adapter protein complexes AP-1 and AP-2. Interacts with the GAE domain proteins GGA1, GGA2 and GGA3. As to expression, expressed primarily in brain (at protein level).

It localises to the cytoplasmic vesicle. Its subcellular location is the clathrin-coated vesicle membrane. It is found in the cell membrane. Its function is as follows. Involved in endocytosis. This Mus musculus (Mouse) protein is Adaptin ear-binding coat-associated protein 1 (Necap1).